Consider the following 437-residue polypeptide: MRLSRHFLPVMKESPADAQIVSHKLMLRAGMIRQTAAGIYAWLPLGHRVLRKIEQIVREEQDRAGAIELLMPTMQSADLWRESGRYDAYGPEMLRIKDRHDREMLFGPTNEEMITAIFRDNARSYRDLPRILYHIQWKFRDEVRPRFGVMRGREFLMKDAYSFDLDIEGARHSYNRMFVAYLRTFRRMGLSAIPMQADTGPIGGDLSHEFIVLAPTGESEVFYHTNWEVERALDVDVDDVAALQGFVDGLTADYAATDEKRDPAREAAAGDSLKQSRGIEVGHIFYFGTKYSAAMGMTVQGPDGQPVTPQMGSYGIGVSRLMGAIIEASHDDAGIVWPDAVAPYTVGLINMRADDARCAAAADDLYAKLEAAGIETLYDDRDERGGAKFATMDLIGLPWQIVVGPKGLDKGVVELKRRATGEKVELSVEDAIARIAG.

This sequence belongs to the class-II aminoacyl-tRNA synthetase family. ProS type 2 subfamily. As to quaternary structure, homodimer.

It localises to the cytoplasm. The catalysed reaction is tRNA(Pro) + L-proline + ATP = L-prolyl-tRNA(Pro) + AMP + diphosphate. In terms of biological role, catalyzes the attachment of proline to tRNA(Pro) in a two-step reaction: proline is first activated by ATP to form Pro-AMP and then transferred to the acceptor end of tRNA(Pro). The protein is Proline--tRNA ligase of Rhizorhabdus wittichii (strain DSM 6014 / CCUG 31198 / JCM 15750 / NBRC 105917 / EY 4224 / RW1) (Sphingomonas wittichii).